The following is a 503-amino-acid chain: Probable cytochrome P450 6a19 (503 aa).

Position 445 (C445) interacts with heme.

The protein belongs to the cytochrome P450 family. Heme serves as cofactor.

Its subcellular location is the endoplasmic reticulum membrane. It localises to the microsome membrane. Its function is as follows. May be involved in the metabolism of insect hormones and in the breakdown of synthetic insecticides. The chain is Probable cytochrome P450 6a19 (Cyp6a19) from Drosophila melanogaster (Fruit fly).